Here is a 177-residue protein sequence, read N- to C-terminus: Large ribosomal subunit protein uL6 (177 aa).

Belongs to the universal ribosomal protein uL6 family. Part of the 50S ribosomal subunit.

Functionally, this protein binds to the 23S rRNA, and is important in its secondary structure. It is located near the subunit interface in the base of the L7/L12 stalk, and near the tRNA binding site of the peptidyltransferase center. The sequence is that of Large ribosomal subunit protein uL6 from Vibrio atlanticus (strain LGP32) (Vibrio splendidus (strain Mel32)).